Consider the following 241-residue polypeptide: Outer membrane protein A (241 aa).

Transmembrane regions (beta stranded) follow at residues 1-8, 13-21, 46-55, 60-67, and 86-94; these read LTAKLSYP, LDIYTRLGG, PVFAGGVEYA, IATRLEYQ, and MLSVGVSYR. Repeat copies occupy residues 105 to 106, 107 to 108, 109 to 110, and 111 to 112. The tract at residues 105-112 is 4 X 2 AA tandem repeats of A-P; it reads APAPAPAP. The OmpA-like domain maps to 114 to 241; that stretch reads VQTKHFTLKS…RRVEIEVKGV (128 aa). Residues C215 and C227 are joined by a disulfide bond.

It belongs to the outer membrane OOP (TC 1.B.6) superfamily. OmpA family. Monomer and homodimer.

It is found in the cell outer membrane. Functionally, with TolR probably plays a role in maintaining the position of the peptidoglycan cell wall in the periplasm. Acts as a porin with low permeability that allows slow penetration of small solutes; an internal gate slows down solute passage. The sequence is that of Outer membrane protein A from Shimwellia blattae (Escherichia blattae).